The chain runs to 1319 residues: MFPMQFTNSAYRQMEPMFAPGPRGQVQPYRPRTKRRQEPQVGNAAIAALANQMSALQLQVAGLAGQARVDRRGPRRVQKSKQKKKNPSNGEKPKEKKKKQKQQEKKGSGGVIKKPRNRPGKEVRISVKRARQSTFPVYHDGAISGYAVLIGSRVFKPAHVKGKIDHPELADIKFQVAEDMDLEAAAYPKSMRDQAAEPATMMDGVYNWEYGTIRVEDNVVIDASGRGKPGDSGRAITDNSGKVVGIVLGGGPDGRRTRLSVIGFDKKMKAREIAYSEAIPWTRAPALLLLPMVIACTYNSNTFDCSKPSCQDCCITAEPKKAMAMLKDNLNDPNYWDLLIAVTTCNSARKKRAVSTSPAAVYDTQILAAHAAASPYRAYCPDCDGTACISPIAIDEVVSSGSDHVLRIRVGSQSGVTAKGGAAGETSLRYLGRDGKVHAADNTRLVVRTTAKCDVLQATGHYILASCPEGQSITVAATLDGTRHQCTTVFEHQVTEKFTRERSKGHHLSDLTKKCTRFSTTPKKSAPYLVDVYDALPISVEISTVVTCNDNQCTVKVPPGTTVKFDKKCKSAAQATVTFTSDSQTFTCEEPVLTAASITQGKPHLRSSMLPSGGKEVKARIPFPFPPETATCRVSVAPLPSITYEESDVLLAGTAKYPVLLTTRNLGFHSNATSEWIQGKYLRRIPVTPQGIELTWGNNAPLHFWSSVRYASGDADAYPWELLVHHTKHHPEYAWAFVGVACGLLVIAVCMFACACNRVRYSLVANTFNPNPPPLTALTAALCCIPGARADQPYLDIIAYLWTNSKVAFGLQCAAPVACVLIVTYALRHCRLCCKSFLGVRGWSALLVILAYVQSCKSYEHTVVVPMDPRAPSYEAVINRNGYDPLKLTIAVNFTVISPTTALEYWTCASVPIVEPPHVGCCTSVSCPSDLSTLHAFTGKAVSDVHCDVHTNVYPLLWGAAHCFCSTENTQVSAVAATVSEFCAQDSERAEAFSVHSSSVTAEVLVTLGEVVTAVHVYVDGVTSARGTDLKIVAGPITTDYSPFDRKVVRIGEEVYNYDWPPYGAGRPGTFGDIQARSTNYVKPNDLYGDIGIEVLQPTNDHVHVAYTYTTSGLLRWLQDAPKPLSVTAPHGCKISANPLLALDCGVGAVPMSINIPDAKFTRKLKDPKPSALKCVVDSCEYGVDYGGAATITYEGHEAGKCGIHSLTPGVPLRTSVVEVVAGANTVKTTFSSPTPEVTLEVEICSAMVTCASECTPPKEHVVATRPRHGSDTGGYISGPAMRWAGGIVGTLAVLFLILAVTYCVVKKCRSKRIRIVKS.

Over 1 to 733 (MFPMQFTNSA…VHHTKHHPEY (733 aa)) the chain is Extracellular. The host transcription inhibition stretch occupies residues 48–81 (ALANQMSALQLQVAGLAGQARVDRRGPRRVQKSK). A Nuclear localization signal motif is present at residues 74 to 119 (PRRVQKSKQKKKNPSNGEKPKEKKKKQKQQEKKGSGGVIKKPRNRP). Residues 101 to 134 (KQQEKKGSGGVIKKPRNRPGKEVRISVKRARQST) form a binding to the viral RNA region. A ribosome-binding region spans residues 119 to 133 (PGKEVRISVKRARQS). The 149-residue stretch at 133 to 281 (STFPVYHDGA…EIAYSEAIPW (149 aa)) folds into the Peptidase S3 domain. Residue His-159 is the Charge relay system of the active site. The Nuclear export signal motif lies at 164-174 (IDHPELADIKF). Catalysis depends on Asp-181, which acts as the Charge relay system. The dimerization of the capsid protein stretch occupies residues 202–212 (MDGVYNWEYGT). The active-site Charge relay system is Ser-232. Residues 238–242 (DNSGK) form a dimerization of the capsid protein region. The tract at residues 282-301 (TRAPALLLLPMVIACTYNSN) is functions as an uncleaved signal peptide for the precursor of protein E3/E2. Cystine bridges form between Cys-296–Cys-305, Cys-380–Cys-486, Cys-383–Cys-388, Cys-453–Cys-467, and Cys-515–Cys-632. The chain crosses the membrane as a helical span at residues 734–754 (AWAFVGVACGLLVIAVCMFAC). Topologically, residues 755–791 (ACNRVRYSLVANTFNPNPPPLTALTAALCCIPGARAD) are cytoplasmic. The transient transmembrane before p62-6K protein processing stretch occupies residues 759-783 (VRYSLVANTFNPNPPPLTALTAALC). S-palmitoyl cysteine; by host attachment occurs at residues Cys-783 and Cys-784. Over 792-806 (QPYLDIIAYLWTNSK) the chain is Extracellular. A helical transmembrane segment spans residues 807-827 (VAFGLQCAAPVACVLIVTYAL). Residues 828–832 (RHCRL) lie on the Cytoplasmic side of the membrane. The helical transmembrane segment at 833–853 (CCKSFLGVRGWSALLVILAYV) threads the bilayer. The Extracellular segment spans residues 854 to 1285 (QSCKSYEHTV…YISGPAMRWA (432 aa)). Cystine bridges form between Cys-908–Cys-983, Cys-921–Cys-963, Cys-922–Cys-965, Cys-927–Cys-947, Cys-1133–Cys-1145, Cys-1175–Cys-1251, Cys-1180–Cys-1255, and Cys-1202–Cys-1245. The tract at residues 953–970 (VYPLLWGAAHCFCSTENT) is E1 fusion peptide loop. A helical transmembrane segment spans residues 1286 to 1306 (GGIVGTLAVLFLILAVTYCVV). Residues 1307–1319 (KKCRSKRIRIVKS) lie on the Cytoplasmic side of the membrane. Cys-1309 carries the S-stearoyl cysteine; by host lipid modification.

Homodimer. Homomultimer. Interacts with host karyopherin KPNA4; this interaction allows the nuclear import of the viral capsid protein. Interacts with spike glycoprotein E2. Interacts with host IRAK1; the interaction leads to inhibition of IRAK1-dependent signaling. In terms of assembly, the precursor of protein E3/E2 and E1 form a heterodimer shortly after synthesis. As to quaternary structure, interacts with spike glycoprotein E2. The precursor of protein E3/E2 and E1 form a heterodimer shortly after synthesis. Processing of the precursor of protein E3/E2 into E2 and E3 results in a heterodimer of the spike glycoproteins E2 and E1. Spike at virion surface are constituted of three E2-E1 heterodimers. After target cell attachment and endocytosis, E1 change conformation to form homotrimers. Interacts with 6K protein. Interacts with spike glycoprotein E1. Processing of the precursor of protein E3/E2 into E2 and E3 results in a heterodimer of the spike glycoproteins E2 and E1. Spike at virion surface are constituted of a trimer of E2-E1 heterodimers. Interacts with 6K protein. In terms of assembly, oligomer. Interacts with spike glycoprotein E1. Interacts with spike glycoprotein E2. In terms of processing, structural polyprotein: Specific enzymatic cleavages in vivo yield mature proteins. Capsid protein is auto-cleaved during polyprotein translation, unmasking a signal peptide at the N-terminus of the precursor of E3/E2. The remaining polyprotein is then targeted to the host endoplasmic reticulum, where host signal peptidase cleaves it into pE2, 6K and E1 proteins. pE2 is further processed to mature E3 and E2 by host furin in trans-Golgi vesicle. Post-translationally, palmitoylated via thioester bonds. These palmitoylations may induce disruption of the C-terminus transmembrane. This would result in the reorientation of E2 C-terminus from lumenal to cytoplasmic side. N-glycosylated. In terms of processing, palmitoylated via thioester bonds.

Its subcellular location is the virion. The protein resides in the host cytoplasm. It localises to the host cell membrane. The protein localises to the host nucleus. It is found in the virion membrane. Its subcellular location is the host Golgi apparatus. The protein resides in the host trans-Golgi network. It localises to the host endoplasmic reticulum. It catalyses the reaction Autocatalytic release of the core protein from the N-terminus of the togavirus structural polyprotein by hydrolysis of a -Trp-|-Ser- bond.. Functionally, forms an icosahedral capsid with a T=4 symmetry composed of 240 copies of the capsid protein surrounded by a lipid membrane through which penetrate 80 spikes composed of trimers of E1-E2 heterodimers. The capsid protein binds to the viral RNA genome at a site adjacent to a ribosome binding site for viral genome translation following genome release. Possesses a protease activity that results in its autocatalytic cleavage from the nascent structural protein. Following its self-cleavage, the capsid protein transiently associates with ribosomes, and within several minutes the protein binds to viral RNA and rapidly assembles into icosahedric core particles. The resulting nucleocapsid eventually associates with the cytoplasmic domain of the spike glycoprotein E2 at the cell membrane, leading to budding and formation of mature virions. In case of infection, new virions attach to target cells and after clathrin-mediated endocytosis their membrane fuses with the host endosomal membrane. This leads to the release of the nucleocapsid into the cytoplasm, followed by an uncoating event necessary for the genomic RNA to become accessible. The uncoating might be triggered by the interaction of capsid proteins with ribosomes. Binding of ribosomes would release the genomic RNA since the same region is genomic RNA-binding and ribosome-binding. Specifically inhibits interleukin-1 receptor-associated kinase 1/IRAK1-dependent signaling during viral entry, representing a means by which the alphaviruses may evade innate immune detection and activation prior to viral gene expression. Provides the signal sequence for the translocation of the precursor of protein E3/E2 to the host endoplasmic reticulum. Furin-cleaved E3 remains associated with spike glycoprotein E1 and mediates pH protection of the latter during the transport via the secretory pathway. After virion release from the host cell, the assembly protein E3 is gradually released in the extracellular space. In terms of biological role, plays a role in viral attachment to target host cell, by binding to the cell receptor. Synthesized as a p62 precursor which is processed by furin at the cell membrane just before virion budding, giving rise to E2-E1 heterodimer. The p62-E1 heterodimer is stable, whereas E2-E1 is unstable and dissociate at low pH. p62 is processed at the last step, presumably to avoid E1 fusion activation before its final export to cell surface. E2 C-terminus contains a transitory transmembrane that would be disrupted by palmitoylation, resulting in reorientation of the C-terminal tail from lumenal to cytoplasmic side. This step is critical since E2 C-terminus is involved in budding by interacting with capsid proteins. This release of E2 C-terminus in cytoplasm occurs lately in protein export, and precludes premature assembly of particles at the endoplasmic reticulum membrane. Its function is as follows. Acts as a viroporin that participates in virus glycoprotein processing and transport to the plasma membrane, cell permeabilization and budding of viral particles. Disrupts the calcium homeostasis of the cell, probably at the endoplasmic reticulum level. This leads to cytoplasmic calcium elevation. Because of its lipophilic properties, the 6K protein is postulated to influence the selection of lipids that interact with the transmembrane domains of the glycoproteins, which, in turn, affects the deformability of the bilayer required for the extreme curvature that occurs as budding proceeds. Present in low amount in virions, about 3% compared to viral glycoproteins. Functionally, class II viral fusion protein. Fusion activity is inactive as long as E1 is bound to E2 in mature virion. After virus attachment to target cell and endocytosis, acidification of the endosome induce dissociation of E1/E2 heterodimer and concomitant trimerization of the E1 subunits. This E1 trimer is fusion active, and promotes release of viral nucleocapsid in cytoplasm after endosome and viral membrane fusion. Efficient fusion requires the presence of cholesterol and sphingolipid in the target membrane. The protein is Structural polyprotein of Oncorhynchus mykiss (Rainbow trout).